We begin with the raw amino-acid sequence, 96 residues long: Frd operon uncharacterized protein C (96 aa).

It belongs to the HupF/HypC family.

This Proteus vulgaris protein is Frd operon uncharacterized protein C.